The primary structure comprises 205 residues: MLKELRPAIVILVALTIITGLIYPLAMTGAAQVLFPYQAQGSLIEQGGKTIGSALIGQSFTADRYFHGRPSATTAPDPKDASKTVPAPYNAVNSMGSNLGPTSKALADRLRQDVATLKAQNPSAAVPVDLVTASGSGLDPDISPQAARFQVPRVAKARNLPEAEVETLIDSRTEGRDLGFLGEPRVNVLKLNLALDRMAASGQPR.

The chain crosses the membrane as a helical span at residues 7-27 (PAIVILVALTIITGLIYPLAM).

This sequence belongs to the KdpC family. In terms of assembly, the system is composed of three essential subunits: KdpA, KdpB and KdpC.

It localises to the cell inner membrane. In terms of biological role, part of the high-affinity ATP-driven potassium transport (or Kdp) system, which catalyzes the hydrolysis of ATP coupled with the electrogenic transport of potassium into the cytoplasm. This subunit acts as a catalytic chaperone that increases the ATP-binding affinity of the ATP-hydrolyzing subunit KdpB by the formation of a transient KdpB/KdpC/ATP ternary complex. This Nitrobacter hamburgensis (strain DSM 10229 / NCIMB 13809 / X14) protein is Potassium-transporting ATPase KdpC subunit.